A 285-amino-acid chain; its full sequence is Protoheme IX farnesyltransferase (285 aa).

Helical transmembrane passes span 8 to 28 (ITKP…FLFA), 36 to 56 (YVLF…ACVF), 80 to 100 (LLPV…GLSI), 107 to 127 (FISM…YTMF), 133 to 153 (FYST…GYTA), 163 to 183 (ILLF…ISIM), 209 to 229 (IFFY…LGYL), 232 to 252 (NFLL…YSNI), and 265 to 285 (FYFS…DVFF).

Belongs to the UbiA prenyltransferase family. Protoheme IX farnesyltransferase subfamily.

Its subcellular location is the cell membrane. It catalyses the reaction heme b + (2E,6E)-farnesyl diphosphate + H2O = Fe(II)-heme o + diphosphate. Its pathway is porphyrin-containing compound metabolism; heme O biosynthesis; heme O from protoheme: step 1/1. Converts heme B (protoheme IX) to heme O by substitution of the vinyl group on carbon 2 of heme B porphyrin ring with a hydroxyethyl farnesyl side group. The sequence is that of Protoheme IX farnesyltransferase from Buchnera aphidicola subsp. Acyrthosiphon pisum (strain Tuc7).